The chain runs to 244 residues: tRNA pseudouridine synthase A (244 aa).

D55 acts as the Nucleophile in catalysis. Substrate is bound at residue Y113.

The protein belongs to the tRNA pseudouridine synthase TruA family. Homodimer.

It catalyses the reaction uridine(38/39/40) in tRNA = pseudouridine(38/39/40) in tRNA. Functionally, formation of pseudouridine at positions 38, 39 and 40 in the anticodon stem and loop of transfer RNAs. The protein is tRNA pseudouridine synthase A of Phytoplasma mali (strain AT).